Reading from the N-terminus, the 284-residue chain is 2-dehydro-3-deoxyphosphooctonate aldolase (284 aa).

It belongs to the KdsA family.

It is found in the cytoplasm. The enzyme catalyses D-arabinose 5-phosphate + phosphoenolpyruvate + H2O = 3-deoxy-alpha-D-manno-2-octulosonate-8-phosphate + phosphate. It functions in the pathway carbohydrate biosynthesis; 3-deoxy-D-manno-octulosonate biosynthesis; 3-deoxy-D-manno-octulosonate from D-ribulose 5-phosphate: step 2/3. Its pathway is bacterial outer membrane biogenesis; lipopolysaccharide biosynthesis. This is 2-dehydro-3-deoxyphosphooctonate aldolase from Actinobacillus succinogenes (strain ATCC 55618 / DSM 22257 / CCUG 43843 / 130Z).